The chain runs to 262 residues: Sulfur carrier protein FdhD (262 aa).

C107 (cysteine persulfide intermediate) is an active-site residue.

This sequence belongs to the FdhD family.

Its subcellular location is the cytoplasm. Functionally, required for formate dehydrogenase (FDH) activity. Acts as a sulfur carrier protein that transfers sulfur from IscS to the molybdenum cofactor prior to its insertion into FDH. In Bacillus subtilis (strain 168), this protein is Sulfur carrier protein FdhD.